A 202-amino-acid polypeptide reads, in one-letter code: Imidazoleglycerol-phosphate dehydratase (202 aa).

Belongs to the imidazoleglycerol-phosphate dehydratase family.

The protein resides in the cytoplasm. The enzyme catalyses D-erythro-1-(imidazol-4-yl)glycerol 3-phosphate = 3-(imidazol-4-yl)-2-oxopropyl phosphate + H2O. It functions in the pathway amino-acid biosynthesis; L-histidine biosynthesis; L-histidine from 5-phospho-alpha-D-ribose 1-diphosphate: step 6/9. The protein is Imidazoleglycerol-phosphate dehydratase of Rhodopirellula baltica (strain DSM 10527 / NCIMB 13988 / SH1).